The sequence spans 245 residues: PF03932 family protein CutC (245 aa).

This sequence belongs to the CutC family.

The protein resides in the cytoplasm. The protein is PF03932 family protein CutC of Sinorhizobium medicae (strain WSM419) (Ensifer medicae).